The sequence spans 283 residues: Pyridoxal kinase PdxY (283 aa).

Substrate is bound at residue Ser8. ATP-binding residues include Asp110 and Glu147. Substrate is bound at residue Asp219.

This sequence belongs to the pyridoxine kinase family. PdxY subfamily. As to quaternary structure, homodimer. Requires Mg(2+) as cofactor.

The enzyme catalyses pyridoxal + ATP = pyridoxal 5'-phosphate + ADP + H(+). It participates in cofactor metabolism; pyridoxal 5'-phosphate salvage; pyridoxal 5'-phosphate from pyridoxal: step 1/1. In terms of biological role, pyridoxal kinase involved in the salvage pathway of pyridoxal 5'-phosphate (PLP). Catalyzes the phosphorylation of pyridoxal to PLP. In Leifsonia xyli subsp. xyli (strain CTCB07), this protein is Pyridoxal kinase PdxY.